The following is a 280-amino-acid chain: Transcription factor HES-1 (280 aa).

Positions 1–44 (MPADIMEKNSSSPVAATPASVNTTPDKPKTASEHRKSSKPIMEK) are disordered. Over residues 10–21 (SSSPVAATPASV) the composition is skewed to low complexity. The span at 26–35 (DKPKTASEHR) shows a compositional bias: basic and acidic residues. Positions 34 to 91 (HRKSSKPIMEKRRRARINESLSQLKTLILDALKKDSSRHSKLEKADILEMTVKHLRNL) constitute a bHLH domain. Positions 110–143 (YRAGFSECMNEVTRFLSTCEGVNTEVRTRLLGHL) constitute an Orange domain. Disordered stretches follow at residues 157-200 (GQPH…PPGG) and 254-280 (TSVGPNAVSPSSGPSLTADSMWRPWRN). Pro residues-rich tracts occupy residues 164–174 (QAPPPPPPGPG) and 181–200 (FAPPPPLVPIPGGAAPPPGG). Residues 254-271 (TSVGPNAVSPSSGPSLTA) show a composition bias toward polar residues. The short motif at 275 to 278 (WRPW) is the WRPW motif element.

As to quaternary structure, transcription repression requires formation of a complex with a corepressor protein of the Groucho/TLE family. Interacts with SIRT1. Interacts (via WPRW motif) with TLE1, and more weakly with TLE2. Interacts with HES6. Interacts with an FA complex, composed of FANCA, FANCF, FANCG and FANCL, but not of FANCC, nor FANCE.

The protein localises to the nucleus. Its function is as follows. Transcriptional repressor of genes that require a bHLH protein for their transcription. May act as a negative regulator of myogenesis by inhibiting the functions of MYOD1 and ASH1. Binds DNA on N-box motifs: 5'-CACNAG-3' with high affinity and on E-box motifs: 5'-CANNTG-3' with low affinity. May play a role in a functional FA core complex response to DNA cross-link damage, being required for the stability and nuclear localization of FA core complex proteins, as well as for FANCD2 monoubiquitination in response to DNA damage. The sequence is that of Transcription factor HES-1 (HES1) from Bos taurus (Bovine).